We begin with the raw amino-acid sequence, 514 residues long: Na(+)/H(+) antiporter NhaB (514 aa).

Helical transmembrane passes span 23–43 (LALL…PFVA), 63–83 (PLLP…TSAA), 97–117 (LLLM…LFIF), 120–140 (LLLS…AAAF), 144–164 (FLDA…FYGI), 202–222 (LMMH…VGEP), 238–258 (FFLR…LTCM), 303–323 (AVIG…VGLI), 357–377 (LTVF…APII), 391–411 (LFYL…VGTI), 447–467 (ATPN…APLI), and 475–495 (VWMA…CVEF).

Belongs to the NhaB Na(+)/H(+) (TC 2.A.34) antiporter family.

Its subcellular location is the cell inner membrane. It catalyses the reaction 2 Na(+)(in) + 3 H(+)(out) = 2 Na(+)(out) + 3 H(+)(in). Its function is as follows. Na(+)/H(+) antiporter that extrudes sodium in exchange for external protons. The sequence is that of Na(+)/H(+) antiporter NhaB from Salmonella agona (strain SL483).